The chain runs to 715 residues: Phosphatidylinositol 4-phosphate 5-kinase 6 (715 aa).

The segment covering 1 to 13 has biased composition (basic and acidic residues); it reads MSVAHADDADDYS. A disordered region spans residues 1–21; sequence MSVAHADDADDYSRPTGESYH. MORN repeat units lie at residues 32 to 54, 55 to 77, 78 to 100, 101 to 123, 124 to 146, 147 to 169, 170 to 192, and 193 to 214; these read YTGQ…DGCM, YVGD…SGAT, YEGD…SGDL, YRGS…NGDC, YDGE…NENH, YIGQ…NGNR, YDGS…DGSF, and YVGV…STSS. A disordered region spans residues 253–306; it reads GASEQSSSGNRTKNSERPRRRSVDGRVSNGEMELRSNGSGYLQVDDNAESTRSS. Polar residues predominate over residues 255–264; the sequence is SEQSSSGNRT. A compositionally biased stretch (basic and acidic residues) spans 265 to 276; that stretch reads KNSERPRRRSVD. The 391-residue stretch at 321 to 711 folds into the PIPK domain; the sequence is TISKGHKNYE…RFRDFIFRVF (391 aa). Positions 671 to 692 are activation loop; the sequence is YDISKKLEHAYKSMQYDPTSIS.

It catalyses the reaction a 1,2-diacyl-sn-glycero-3-phospho-(1D-myo-inositol 4-phosphate) + ATP = a 1,2-diacyl-sn-glycero-3-phospho-(1D-myo-inositol-4,5-bisphosphate) + ADP + H(+). The polypeptide is Phosphatidylinositol 4-phosphate 5-kinase 6 (PIP5K6) (Arabidopsis thaliana (Mouse-ear cress)).